A 306-amino-acid polypeptide reads, in one-letter code: MATAQLSHNTRTLKASKNTIFPSQVTNEHESLVVVKKLFATCISCITYLRGLFPESSYRDRRLDDLSLKILREDKKCPGSLHIIKWIQGCFDALEKRYLHMAVLTLYTNPKEPEKVTEIYQFRFKYTKKGTTMDFDSSSTSFESGTDSEDIKKACSLLIRQLYILMQNLGPLPNDVILTMKLHYYNSVTPHDYQPPGFKEAVNSHFLLFEGEPVSLRMGSVSSGFHSMKVKVTTEATRMLDGENSVSQDDGTTEIAHQGLDCDEEEEACGSQVQRMNFVHIEPSFESSRKKKKVSEPVTVFIPNRK.

The HORMA domain occupies 29-232 (HESLVVVKKL…SGFHSMKVKV (204 aa)). Ser271 carries the post-translational modification Phosphoserine.

In terms of assembly, interacts with HORMAD1. In terms of processing, phosphorylated in a SPO11-dependent manner. As to expression, specifically expressed in meiotic germ cells.

The protein localises to the nucleus. The protein resides in the chromosome. Essential for synapsis surveillance during meiotic prophase via the recruitment of ATR activity. Plays a key role in the male mid-pachytene checkpoint and the female meiotic prophase checkpoint: required for efficient build-up of ATR activity on unsynapsed chromosome regions, a process believed to form the basis of meiotic silencing of unsynapsed chromatin (MSUC) and meiotic prophase quality control in both sexes. Required for the DNA double-strand break-independent, BRCA1-dependent activation of ATR on the sex chromosomes that is essential for normal sex body formation. The chain is HORMA domain-containing protein 2 (Hormad2) from Mus musculus (Mouse).